An 87-amino-acid chain; its full sequence is U14-lycotoxin-Ls1a (87 aa).

The first 20 residues, methionine 1–serine 20, serve as a signal peptide directing secretion. The WAP domain maps to glutamate 21 to serine 66. Intrachain disulfides connect cysteine 24-cysteine 54, cysteine 32-cysteine 58, cysteine 41-cysteine 53, cysteine 42-cysteine 80, and cysteine 47-cysteine 62.

The protein belongs to the venom protein 11 family. 01 (wap-1) subfamily. In terms of processing, contains 5 disulfide bonds. Expressed by the venom gland.

Its subcellular location is the secreted. In terms of biological role, has antibacterial activity. The polypeptide is U14-lycotoxin-Ls1a (Lycosa singoriensis (Wolf spider)).